The chain runs to 93 residues: Pyrimidine/purine nucleoside phosphorylase (93 aa).

This sequence belongs to the nucleoside phosphorylase PpnP family.

The catalysed reaction is a purine D-ribonucleoside + phosphate = a purine nucleobase + alpha-D-ribose 1-phosphate. The enzyme catalyses adenosine + phosphate = alpha-D-ribose 1-phosphate + adenine. It carries out the reaction cytidine + phosphate = cytosine + alpha-D-ribose 1-phosphate. It catalyses the reaction guanosine + phosphate = alpha-D-ribose 1-phosphate + guanine. The catalysed reaction is inosine + phosphate = alpha-D-ribose 1-phosphate + hypoxanthine. The enzyme catalyses thymidine + phosphate = 2-deoxy-alpha-D-ribose 1-phosphate + thymine. It carries out the reaction uridine + phosphate = alpha-D-ribose 1-phosphate + uracil. It catalyses the reaction xanthosine + phosphate = alpha-D-ribose 1-phosphate + xanthine. Functionally, catalyzes the phosphorolysis of diverse nucleosides, yielding D-ribose 1-phosphate and the respective free bases. Can use uridine, adenosine, guanosine, cytidine, thymidine, inosine and xanthosine as substrates. Also catalyzes the reverse reactions. The polypeptide is Pyrimidine/purine nucleoside phosphorylase (Hahella chejuensis (strain KCTC 2396)).